Consider the following 142-residue polypeptide: ATP synthase F(0) complex subunit C3, mitochondrial (142 aa).

The transit peptide at 1–67 directs the protein to the mitochondrion; the sequence is MFACAKLACT…REFQTSAISR (67 aa). Residues 83–103 traverse the membrane as a helical segment; that stretch reads VGVAGSGAGIGTVFGSLIIGY. At K110 the chain carries N6,N6,N6-trimethyllysine. Residues 118-138 traverse the membrane as a helical segment; it reads ILGFALSEAMGLFCLMVAFLI.

Belongs to the ATPase C chain family. As to quaternary structure, F-type ATPases have 2 components, CF(1) - the catalytic core - and CF(0) - the membrane proton channel. CF(1) has five subunits: alpha(3), beta(3), gamma(1), delta(1), epsilon(1). CF(0) has three main subunits: a, b and c. Interacts with TMEM70 and TMEM242. In terms of processing, trimethylated by ATPSCKMT at Lys-110. Methylation is required for proper incorporation of the C subunit into the ATP synthase complex and mitochondrial respiration.

It localises to the mitochondrion membrane. In terms of biological role, mitochondrial membrane ATP synthase (F(1)F(0) ATP synthase or Complex V) produces ATP from ADP in the presence of a proton gradient across the membrane which is generated by electron transport complexes of the respiratory chain. F-type ATPases consist of two structural domains, F(1) - containing the extramembraneous catalytic core and F(0) - containing the membrane proton channel, linked together by a central stalk and a peripheral stalk. During catalysis, ATP synthesis in the catalytic domain of F(1) is coupled via a rotary mechanism of the central stalk subunits to proton translocation. Part of the complex F(0) domain. A homomeric c-ring of probably 10 subunits is part of the complex rotary element. This chain is ATP synthase F(0) complex subunit C3, mitochondrial, found in Homo sapiens (Human).